Consider the following 142-residue polypeptide: MKTFTAKPETVKREWFVVDAAGQTLGRLATEIASRLRGKHKPEYTPHVDTGDYIVVINAEQIRVTGAKSSDKMYYSHSGFPGGIKEINFEKLIAKAPERVIETAVKGMLPKNPLGRDMYRKLKVYAGAAHPHTAQQPQELKI.

Belongs to the universal ribosomal protein uL13 family. As to quaternary structure, part of the 50S ribosomal subunit.

In terms of biological role, this protein is one of the early assembly proteins of the 50S ribosomal subunit, although it is not seen to bind rRNA by itself. It is important during the early stages of 50S assembly. The protein is Large ribosomal subunit protein uL13 of Pseudomonas putida (strain W619).